Consider the following 396-residue polypeptide: Zinc metalloproteinase nas-24 (396 aa).

Residues 1-20 (MTRVVHIIGAAFLLSSYAYC) form the signal peptide. Residues 44-230 (ERLGSKWLGG…YKINQYYGCG (187 aa)) enclose the Peptidase M12A domain. Asparagine 63 and asparagine 79 each carry an N-linked (GlcNAc...) asparagine glycan. 4 cysteine pairs are disulfide-bonded: cysteine 82-cysteine 229, cysteine 105-cysteine 129, cysteine 231-cysteine 251, and cysteine 253-cysteine 262. Histidine 137 lines the Zn(2+) pocket. Glutamate 138 is an active-site residue. Histidine 141 and histidine 147 together coordinate Zn(2+). Positions 224–263 (NQYYGCGCSTQLECKNGGYTSPSDCSRCNCPKGFFGKLCN) constitute an EGF-like domain. The N-linked (GlcNAc...) asparagine glycan is linked to asparagine 310.

Zn(2+) is required as a cofactor.

The protein resides in the secreted. Its function is as follows. Metalloprotease. The polypeptide is Zinc metalloproteinase nas-24 (nas-24) (Caenorhabditis elegans).